A 227-amino-acid polypeptide reads, in one-letter code: Enolase-phosphatase E1 (227 aa).

2 residues coordinate Mg(2+): Asp-11 and Glu-13. Substrate contacts are provided by residues 118-119 and Lys-161; that span reads SS. Position 186 (Asp-186) interacts with Mg(2+).

Belongs to the HAD-like hydrolase superfamily. MasA/MtnC family. As to quaternary structure, monomer. It depends on Mg(2+) as a cofactor.

The protein localises to the cytoplasm. The protein resides in the nucleus. The enzyme catalyses 5-methylsulfanyl-2,3-dioxopentyl phosphate + H2O = 1,2-dihydroxy-5-(methylsulfanyl)pent-1-en-3-one + phosphate. It participates in amino-acid biosynthesis; L-methionine biosynthesis via salvage pathway; L-methionine from S-methyl-5-thio-alpha-D-ribose 1-phosphate: step 3/6. Its pathway is amino-acid biosynthesis; L-methionine biosynthesis via salvage pathway; L-methionine from S-methyl-5-thio-alpha-D-ribose 1-phosphate: step 4/6. In terms of biological role, bifunctional enzyme that catalyzes the enolization of 2,3-diketo-5-methylthiopentyl-1-phosphate (DK-MTP-1-P) into the intermediate 2-hydroxy-3-keto-5-methylthiopentenyl-1-phosphate (HK-MTPenyl-1-P), which is then dephosphorylated to form the acireductone 1,2-dihydroxy-3-keto-5-methylthiopentene (DHK-MTPene). The chain is Enolase-phosphatase E1 from Saccharomyces cerevisiae (strain JAY291) (Baker's yeast).